The primary structure comprises 250 residues: uncharacterized protein (250 aa).

The signal sequence occupies residues 1-25; sequence MKTLRTLCVLMILSGVIFFGLKIDA.

This is an uncharacterized protein from Bacillus subtilis (strain 168).